A 282-amino-acid chain; its full sequence is HMG box-containing protein R545 (282 aa).

Positions 1 to 282 are disordered; it reads MPKKTATKAN…KKEASDEESD (282 aa). Over residues 16–29 the composition is skewed to acidic residues; that stretch reads DSENDSVVSEEEDN. Residues 70 to 87 are compositionally biased toward basic residues; the sequence is KGKVNAKKAPAKKAPVKK. The segment covering 93–121 has biased composition (acidic residues); the sequence is DSDNEEDEASEDGSDDEEDVVSADDSDSD. Residues 127 to 153 show a composition bias toward basic residues; it reads KAAKKAPAKKAPAKKAPAKKAPAKKGK. 2 stretches are compositionally biased toward basic and acidic residues: residues 176–187 and 197–214; these read TKKDGDKPKKPL and RMPE…KEYM. The HMG box DNA-binding region spans 183 to 252; it reads PKKPLSDYQK…KAPAKGGSKS (70 aa). Positions 253 to 273 are enriched in basic residues; that stretch reads TAKKAPAKKAPAKKAPAKKSK.

This Acanthamoeba polyphaga mimivirus (APMV) protein is HMG box-containing protein R545.